A 153-amino-acid polypeptide reads, in one-letter code: Pheromone-binding protein Gp-9 (153 aa).

The signal sequence occupies residues 1–19; the sequence is MKTFVLHIFIFALVAFASA. 3 cysteine pairs are disulfide-bonded: Cys37/Cys77, Cys73/Cys129, and Cys118/Cys138.

It belongs to the PBP/GOBP family. Homodimer.

Its subcellular location is the secreted. Functionally, colony queen number, a major feature of social organization, is associated with worker genotype for Gp-9. Colonies are headed by either a single reproductive queen (monogyne form) or multiple queens (polygyne form). Differences in worker Gp-9 genotypes between social forms may cause differences in workers' abilities to recognize queens and regulate their numbers. The sequence is that of Pheromone-binding protein Gp-9 from Solenopsis pusillignis (Fire ant).